A 202-amino-acid chain; its full sequence is Urease accessory protein UreG (202 aa).

Position 11–18 (11–18) interacts with GTP; the sequence is GPVGSGKT.

The protein belongs to the SIMIBI class G3E GTPase family. UreG subfamily. Homodimer. UreD, UreF and UreG form a complex that acts as a GTP-hydrolysis-dependent molecular chaperone, activating the urease apoprotein by helping to assemble the nickel containing metallocenter of UreC. The UreE protein probably delivers the nickel.

It is found in the cytoplasm. Functionally, facilitates the functional incorporation of the urease nickel metallocenter. This process requires GTP hydrolysis, probably effectuated by UreG. This Prochlorococcus marinus (strain MIT 9313) protein is Urease accessory protein UreG.